Consider the following 154-residue polypeptide: Protein X (154 aa).

Positions 68–117 (PCALRFTSARRMETTVNAHRNLPKVLHKRTLGLSVMSTTDLEAYFKDCVF) are mitochondrial targeting sequence.

It belongs to the orthohepadnavirus protein X family. In terms of assembly, may form homodimer. May interact with host CEBPA, CFLAR, CREB1, DDB1, E4F1, HBXIP, HSPD1/HSP60, NFKBIA, POLR2E and SMAD4. Interacts with host SMC5-SMC6 complex and induces its degradation. Interacts with host TRPC4AP; leading to prevent ubiquitination of TRPC4AP. Interacts with host PLSCR1; this interaction promotes ubiquitination and degradation of HBx and impairs HBx-mediated cell proliferation. In terms of processing, a fraction may be phosphorylated in insect cells and HepG2 cells, a human hepatoblastoma cell line. Phosphorylated in vitro by host protein kinase C or mitogen-activated protein kinase. N-acetylated in insect cells.

The protein resides in the host cytoplasm. The protein localises to the host nucleus. Its subcellular location is the host mitochondrion. Functionally, multifunctional protein that plays a role in silencing host antiviral defenses and promoting viral transcription. Does not seem to be essential for HBV infection. May be directly involved in development of cirrhosis and liver cancer (hepatocellular carcinoma). Most of cytosolic activities involve modulation of cytosolic calcium. The effect on apoptosis is controversial depending on the cell types in which the studies have been conducted. May induce apoptosis by localizing in mitochondria and causing loss of mitochondrial membrane potential. May also modulate apoptosis by binding host CFLAR, a key regulator of the death-inducing signaling complex (DISC). Promotes viral transcription by using the host E3 ubiquitin ligase DDB1 to target the SMC5-SMC6 complex to proteasomal degradation. This host complex would otherwise bind to viral episomal DNA, and prevents its transcription. Moderately stimulates transcription of many different viral and cellular transcription elements. Promoters and enhancers stimulated by HBx contain DNA binding sites for NF-kappa-B, AP-1, AP-2, c-EBP, ATF/CREB, or the calcium-activated factor NF-AT. The sequence is that of Protein X from Hepatitis B virus genotype B1 (isolate Japan/Yamagata-2/1998) (HBV-B).